The following is an 853-amino-acid chain: DNA mismatch repair protein MutS (853 aa).

ATP is bound at residue 614–621 (GPNMGGKS).

Belongs to the DNA mismatch repair MutS family.

Its function is as follows. This protein is involved in the repair of mismatches in DNA. It is possible that it carries out the mismatch recognition step. This protein has a weak ATPase activity. The chain is DNA mismatch repair protein MutS from Escherichia coli O7:K1 (strain IAI39 / ExPEC).